We begin with the raw amino-acid sequence, 434 residues long: Progestin and adipoQ receptor-like protein 1 (434 aa).

Over 1 to 201 the chain is Cytoplasmic; that stretch reads MNPDEVNRAL…KSIWSLHTET (201 aa). 2 disordered regions span residues 74–103 and 118–137; these read LPQQ…MPKH and EINL…ELEV. Residues 202 to 222 form a helical membrane-spanning segment; it reads GNIWTHLIGCVAFFFLACWFL. The Extracellular portion of the chain corresponds to 223–234; sequence TRPDNHIQFQEK. The chain crosses the membrane as a helical span at residues 235-255; sequence VVFSFFFAGAVLCLGLSFAFH. Residues 256–273 are Cytoplasmic-facing; sequence TLSCHSVNVVKIFCKLDY. A helical membrane pass occupies residues 274–294; that stretch reads MGISLLIIGSFIPWIYYGFYC. Residues 295–299 are Extracellular-facing; that stretch reads RREPK. The chain crosses the membrane as a helical span at residues 300–320; it reads ITYIAMVSVLGIGAIVVSLWD. Topologically, residues 321–331 are cytoplasmic; the sequence is KFSESRFRPIR. Residues 332-352 form a helical membrane-spanning segment; that stretch reads AAVFVGMGCSGVIPTIHYIIT. Topologically, residues 353–362 are extracellular; it reads DGVHSLFADN. A helical membrane pass occupies residues 363–383; the sequence is SFHWLLLMAFLYLLGAGLYAT. Topologically, residues 384–403 are cytoplasmic; sequence RTPERFFPGKCDIWFQSHQL. Residues 404–424 traverse the membrane as a helical segment; sequence FHTCVVIAAFVHYYGISEMAF. The Extracellular segment spans residues 425 to 434; it reads ARLNEQCPVR.

It belongs to the ADIPOR family.

The protein resides in the membrane. Its function is as follows. Probable receptor, which may be involved in metabolic pathways that regulate lipid metabolism such as fatty acid oxidation. This is Progestin and adipoQ receptor-like protein 1 (paqr-1) from Caenorhabditis elegans.